The chain runs to 378 residues: Beta-1,3-N-acetylglucosaminyltransferase lunatic fringe (378 aa).

At 1 to 8 the chain is on the cytoplasmic side; that stretch reads MLQRCGRR. A helical; Signal-anchor for type II membrane protein membrane pass occupies residues 9–29; that stretch reads LLLALVGALLACLLVLTADPP. The Lumenal segment spans residues 30–378; that stretch reads PTPMPAERGR…TPWCPRSAIF (349 aa). The tract at residues 85–108 is disordered; the sequence is RDADPPPGVASRQGDGHPRPPAEV. A substrate-binding site is contributed by arginine 128. Asparagine 166 carries an N-linked (GlcNAc...) asparagine glycan. 2 cysteine pairs are disulfide-bonded: cysteine 167/cysteine 178 and cysteine 196/cysteine 259. Residue aspartate 200 coordinates substrate. Aspartate 201 provides a ligand contact to Mn(2+). Residue aspartate 289 is part of the active site. Histidine 313 serves as a coordination point for Mn(2+). A disulfide bridge links cysteine 363 with cysteine 372.

It belongs to the glycosyltransferase 31 family. The cofactor is Mn(2+). It depends on Co(2+) as a cofactor. In terms of processing, a soluble form may be derived from the membrane form by proteolytic processing. In terms of tissue distribution, detected at 12.5 dpc in all tissues examined with the highest level observed in adult brain and spleen. Detected in the dental epithelium.

The protein localises to the golgi apparatus. The protein resides in the golgi apparatus membrane. It catalyses the reaction 3-O-(alpha-L-fucosyl)-L-threonyl-[EGF-like domain protein] + UDP-N-acetyl-alpha-D-glucosamine = 3-O-(N-acetyl-beta-D-glucosaminyl-(1-&gt;3)-alpha-L-fucosyl)-L-threonyl-[EGF-like domain protein] + UDP + H(+). It carries out the reaction 3-O-(alpha-L-fucosyl)-L-seryl-[EGF-like domain protein] + UDP-N-acetyl-alpha-D-glucosamine = 3-O-(N-acetyl-beta-D-glucosaminyl-(1-&gt;3)-alpha-L-fucosyl)-L-seryl-[EGF-like domain protein] + UDP + H(+). In terms of biological role, glycosyltransferase that initiates the elongation of O-linked fucose residues attached to EGF-like repeats in the extracellular domain of Notch molecules. Modulates NOTCH1 activity by modifying O-fucose residues at specific EGF-like domains resulting in inhibition of NOTCH1 activation by JAG1 and enhancement of NOTCH1 activation by DLL1 via an increase in its binding to DLL1. Decreases the binding of JAG1 to NOTCH2 but not that of DLL1. Essential mediator of somite segmentation and patterning. During somite boundary formation, it restricts Notch activity in the presomitic mesoderm to a boundary-forming territory in the posterior half of the prospective somite. In this region, Notch function activates a set of genes that are involved in boundary formation and in anterior-posterior somite identity. Ectopically expressed in the thymus, Lfgn inhibits Notch signaling which results in inhibition of T-cell commitment and promotes B-cell development in lymphoid progenitors. May play a role in boundary formation of the enamel knot. The chain is Beta-1,3-N-acetylglucosaminyltransferase lunatic fringe from Mus musculus (Mouse).